Reading from the N-terminus, the 150-residue chain is Large ribosomal subunit protein bL9 (150 aa).

This sequence belongs to the bacterial ribosomal protein bL9 family.

Its function is as follows. Binds to the 23S rRNA. This chain is Large ribosomal subunit protein bL9, found in Vesicomyosocius okutanii subsp. Calyptogena okutanii (strain HA).